Here is a 309-residue protein sequence, read N- to C-terminus: Putative pyridoxal kinase C6F6.11c (309 aa).

Substrate-binding residues include Ser12 and Tyr123. Residues 182–183 (SS) and 209–221 (LIPV…RGTG) each bind ATP. Position 222 (Asp222) interacts with substrate.

The protein belongs to the pyridoxine kinase family. A divalent metal cation serves as cofactor.

It localises to the cytoplasm. Its subcellular location is the nucleus. The catalysed reaction is pyridoxal + ATP = pyridoxal 5'-phosphate + ADP + H(+). Functionally, required for synthesis of pyridoxal-5-phosphate from vitamin B6. This Schizosaccharomyces pombe (strain 972 / ATCC 24843) (Fission yeast) protein is Putative pyridoxal kinase C6F6.11c.